The sequence spans 834 residues: Unextended protein (834 aa).

The N-terminal stretch at 1–20 (MNTYFISFITIIIFANGING) is a signal peptide. Residues 21-182 (TSVDTSNKLL…DFLKIKTFEP (162 aa)) lie on the Extracellular side of the membrane. Residues Asn-38, Asn-42, and Asn-156 are each glycosylated (N-linked (GlcNAc...) asparagine). Residues 182–361 (PLIPVWLAII…NDVNDLDKNE (180 aa)) enclose the CNNM transmembrane domain. The chain crosses the membrane as a helical span at residues 183-203 (LIPVWLAIIIIVTCLGFSALF). Residues 204 to 244 (SGLNLGLMSMDRTELKILRNTGTEKEKKYASKIAPVRDQGN) are Cytoplasmic-facing. A helical transmembrane segment spans residues 245–265 (YLLCSILLGNVLVNSTFTILL). At 266-267 (DG) the chain is on the extracellular side. A helical transmembrane segment spans residues 268-288 (LTSGLFAVIFSTLAIVLFGEI). The Cytoplasmic portion of the chain corresponds to 289-298 (TPQAVCSRHG). The helical transmembrane segment at 299–319 (LAIGAKTILVTKTVMAITAPL) threads the bilayer. Residues 320-834 (SYPVSRILDK…DKFESKQSKP (515 aa)) lie on the Extracellular side of the membrane. CBS domains are found at residues 380–441 (MTHI…NTPL) and 448–515 (YQNP…IVDE). N-linked (GlcNAc...) asparagine glycosylation occurs at Asn-522. 604-656 (YIFTQGKAVDFFVLILEGRVEVTIGKEALMFESGPFTYFGTQALVPNVVIDSP) is an a nucleoside 3',5'-cyclic phosphate binding site. The disordered stretch occupies residues 739–765 (CFAQNQSTRRLSNRSINSSPTNMNRSP). Over residues 740-763 (FAQNQSTRRLSNRSINSSPTNMNR) the composition is skewed to polar residues. Residues Asn-743, Asn-751, and Asn-790 are each glycosylated (N-linked (GlcNAc...) asparagine). The segment at 807–834 (SGEQDTTAASMPLLPKLDDKFESKQSKP) is disordered. Basic and acidic residues predominate over residues 822 to 834 (KLDDKFESKQSKP).

The protein belongs to the ACDP family. In terms of assembly, interacts with PRL-1, possibly at the plasma membrane.

The protein resides in the cell membrane. Functionally, probable metal transporter. Acts downstream of PRL-1 and protects the nervous system against olfactory carbon dioxide stimulation. The polypeptide is Unextended protein (Drosophila melanogaster (Fruit fly)).